We begin with the raw amino-acid sequence, 450 residues long: Divalent metal cation transporter MntH (450 aa).

Transmembrane regions (helical) follow at residues 34–54, 61–81, 108–128, 141–161, 170–190, 212–232, 263–283, 305–325, 361–381, 383–403, and 422–442; these read LSFLGPGLLVAVGYMDPGNWI, AQYGYTLLFVILISSLSAMLL, IAIIFWIIAELAIIATDIAEV, IPLIVGALITVLDVFLLLFIM, AIVGTLIFTVLFIFIFEVYIS, GILYIALGIIGATIMPHNLYL, IQLSIAFVVNCLLLVLGASLF, PVLGATMGAIMSTLFAVALLA, SLAVIPVIVCLSIFKGNAAKI, QLLVFSQVFLSIALPFCLIPL, and VNIISWTLIIILSILNVYLIV.

The protein belongs to the NRAMP family.

The protein localises to the cell membrane. In terms of biological role, h(+)-stimulated, divalent metal cation uptake system. This is Divalent metal cation transporter MntH from Staphylococcus aureus (strain bovine RF122 / ET3-1).